The sequence spans 152 residues: Antiholin-like protein LrgA (152 aa).

Helical transmembrane passes span 23–43 (YSIF…KIIE), 45–65 (FMPI…IALC), 77–97 (VGTA…ISVI), and 108–128 (ILII…TGFA).

It belongs to the CidA/LrgA family. LrgA subfamily.

The protein localises to the cell membrane. In terms of biological role, inhibits the expression or activity of extracellular murein hydrolases by interacting, possibly with LrgB, with the holin-like proteins CidA and/or CidB. The LrgAB and CidAB proteins may affect the proton motive force of the membrane. May be involved in programmed cell death (PCD), possibly triggering PCD in response to antibiotics and environmental stresses. In Staphylococcus epidermidis (strain ATCC 35984 / DSM 28319 / BCRC 17069 / CCUG 31568 / BM 3577 / RP62A), this protein is Antiholin-like protein LrgA.